The following is a 200-amino-acid chain: Potassium-transporting ATPase KdpC subunit (200 aa).

Residues 7-27 (PALVMIVLFTILTGLIYPLAM) form a helical membrane-spanning segment.

This sequence belongs to the KdpC family. As to quaternary structure, the system is composed of three essential subunits: KdpA, KdpB and KdpC.

The protein localises to the cell inner membrane. Functionally, part of the high-affinity ATP-driven potassium transport (or Kdp) system, which catalyzes the hydrolysis of ATP coupled with the electrogenic transport of potassium into the cytoplasm. This subunit acts as a catalytic chaperone that increases the ATP-binding affinity of the ATP-hydrolyzing subunit KdpB by the formation of a transient KdpB/KdpC/ATP ternary complex. This chain is Potassium-transporting ATPase KdpC subunit, found in Methylocella silvestris (strain DSM 15510 / CIP 108128 / LMG 27833 / NCIMB 13906 / BL2).